We begin with the raw amino-acid sequence, 219 residues long: Small ribosomal subunit protein uS3 (219 aa).

In terms of domain architecture, KH type-2 spans 38–106 (IREYIENRLK…RVHINIFEVK (69 aa)).

Belongs to the universal ribosomal protein uS3 family. Part of the 30S ribosomal subunit. Forms a tight complex with proteins S10 and S14.

Binds the lower part of the 30S subunit head. Binds mRNA in the 70S ribosome, positioning it for translation. The sequence is that of Small ribosomal subunit protein uS3 from Halalkalibacterium halodurans (strain ATCC BAA-125 / DSM 18197 / FERM 7344 / JCM 9153 / C-125) (Bacillus halodurans).